Reading from the N-terminus, the 460-residue chain is tRNA modification GTPase MnmE (460 aa).

Positions 29, 91, and 132 each coordinate (6S)-5-formyl-5,6,7,8-tetrahydrofolate. Residues 227-383 (GISIALIGKT…LIDTIIKKCG (157 aa)) enclose the TrmE-type G domain. Asn-237 is a binding site for K(+). GTP contacts are provided by residues 237–242 (NVGKSS), 256–262 (TNIPGTT), and 281–284 (DTAG). Ser-241 provides a ligand contact to Mg(2+). Thr-256, Ile-258, and Thr-261 together coordinate K(+). Thr-262 is a binding site for Mg(2+). Lys-460 provides a ligand contact to (6S)-5-formyl-5,6,7,8-tetrahydrofolate.

This sequence belongs to the TRAFAC class TrmE-Era-EngA-EngB-Septin-like GTPase superfamily. TrmE GTPase family. In terms of assembly, homodimer. Heterotetramer of two MnmE and two MnmG subunits. Requires K(+) as cofactor.

The protein localises to the cytoplasm. In terms of biological role, exhibits a very high intrinsic GTPase hydrolysis rate. Involved in the addition of a carboxymethylaminomethyl (cmnm) group at the wobble position (U34) of certain tRNAs, forming tRNA-cmnm(5)s(2)U34. In Prochlorococcus marinus (strain AS9601), this protein is tRNA modification GTPase MnmE.